A 318-amino-acid chain; its full sequence is N-acyl-aromatic-L-amino acid amidohydrolase (carboxylate-forming) (318 aa).

The tract at residues methionine 1 to glutamine 210 is hydrolytic domain. Residues histidine 21 and glutamate 24 each contribute to the Zn(2+) site. Substrate is bound by residues arginine 63 and asparagine 70 to arginine 71. A Zn(2+)-binding site is contributed by histidine 116. 2 residues coordinate substrate: glutamate 177 and tyrosine 287. The segment at glycine 211–proline 318 is shielding domain. Threonine 317 carries the phosphothreonine modification.

Belongs to the AspA/AstE family. Aspartoacylase subfamily. As to quaternary structure, exists as a mixture of homodimers and homotetramer, both catalytically active. Zn(2+) is required as a cofactor. Expressed predominantly in kidney and to a lesser extent in liver. Weakly expressed in heart, small intestine, brain, lung, testis, and stomach.

It localises to the apical cell membrane. Its subcellular location is the cytoplasm. It carries out the reaction an N-acyl-aromatic L-alpha-amino acid + H2O = an aromatic L-alpha-amino acid + a carboxylate. It catalyses the reaction an N-acetyl-L-cysteine-S-conjugate + H2O = an S-substituted L-cysteine + acetate. Functionally, plays an important role in deacetylating mercapturic acids in kidney proximal tubules. Also acts on N-acetyl-aromatic amino acids. The chain is N-acyl-aromatic-L-amino acid amidohydrolase (carboxylate-forming) (Acy3) from Mus musculus (Mouse).